The sequence spans 669 residues: MTGLFQLVSSYSPSGDQPAAVQKLVTNFHAGIAKQVLLGVTGSGKTYTIANVVEQIQKPTLVMAPNKTLAAQLYGEFKAFFPHNAVEYFVSYYDYYQPEAYVPASDTFIEKDSSINEYIEQMRLAATKALLSRSDVLVVATVSAIYGLGAPEDYLSLRLILSLGEHIEQRQLIRHLTELQYTRNELDLVRGSFRVRGEVVDVFPAESEMEALRIELFDGEIESLSLFDPLTGQTVRKLQRFSVYPKTHYATTRERTLSAVDTIKDELKEYLELLYGRNKLVEAQRLAQRTQFDLEMMAEVGYCNGIENYSRHLTGKAPGEPPPTLFDYLPPDALLVIDESHVTIPQIGAMFKGDRSRKETLVEFGFRLPSALDNRPLRFEEWEVRSPRSIYVSATPGSYEFRESAGEVIELLVRPTGLIDPEIEIRPVATQVDDLISQINACIKLGDRVLVTTLTKRMAENLTEYLSEQGIRIRYLHSEIDTVERVEIIRDLRLGKFDVLVGINLLREGLDMPEVSLVAILDADKEGFLRSTSSLIQTIGRAARSVRGRAILYADKVTRSMRAAIDETERRRQKQKEYNAENGIVPKSVVRPISDILEGARDGVEVKSKGKGRRVDEVPADYGALNQAEIAAQMKVLEQKMYQHARDLEFEDAARIRDQIQRLREAGLG.

The region spanning 26–183 (TNFHAGIAKQ…RHLTELQYTR (158 aa)) is the Helicase ATP-binding domain. 39–46 (GVTGSGKT) is an ATP binding site. The short motif at 92 to 115 (YYDYYQPEAYVPASDTFIEKDSSI) is the Beta-hairpin element. The region spanning 431 to 597 (QVDDLISQIN…SVVRPISDIL (167 aa)) is the Helicase C-terminal domain. Residues 631–666 (AAQMKVLEQKMYQHARDLEFEDAARIRDQIQRLREA) form the UVR domain.

Belongs to the UvrB family. Forms a heterotetramer with UvrA during the search for lesions. Interacts with UvrC in an incision complex.

It is found in the cytoplasm. The UvrABC repair system catalyzes the recognition and processing of DNA lesions. A damage recognition complex composed of 2 UvrA and 2 UvrB subunits scans DNA for abnormalities. Upon binding of the UvrA(2)B(2) complex to a putative damaged site, the DNA wraps around one UvrB monomer. DNA wrap is dependent on ATP binding by UvrB and probably causes local melting of the DNA helix, facilitating insertion of UvrB beta-hairpin between the DNA strands. Then UvrB probes one DNA strand for the presence of a lesion. If a lesion is found the UvrA subunits dissociate and the UvrB-DNA preincision complex is formed. This complex is subsequently bound by UvrC and the second UvrB is released. If no lesion is found, the DNA wraps around the other UvrB subunit that will check the other stand for damage. In Xylella fastidiosa (strain M23), this protein is UvrABC system protein B.